The chain runs to 187 residues: ATP synthase subunit b (187 aa).

Residues 32–52 form a helical membrane-spanning segment; the sequence is NILDTNLINLAIIITVLFVFG.

This sequence belongs to the ATPase B chain family. In terms of assembly, F-type ATPases have 2 components, F(1) - the catalytic core - and F(0) - the membrane proton channel. F(1) has five subunits: alpha(3), beta(3), gamma(1), delta(1), epsilon(1). F(0) has four main subunits: a(1), b(1), b'(1) and c(10-14). The alpha and beta chains form an alternating ring which encloses part of the gamma chain. F(1) is attached to F(0) by a central stalk formed by the gamma and epsilon chains, while a peripheral stalk is formed by the delta, b and b' chains.

The protein localises to the cellular thylakoid membrane. Its function is as follows. F(1)F(0) ATP synthase produces ATP from ADP in the presence of a proton or sodium gradient. F-type ATPases consist of two structural domains, F(1) containing the extramembraneous catalytic core and F(0) containing the membrane proton channel, linked together by a central stalk and a peripheral stalk. During catalysis, ATP synthesis in the catalytic domain of F(1) is coupled via a rotary mechanism of the central stalk subunits to proton translocation. Functionally, component of the F(0) channel, it forms part of the peripheral stalk, linking F(1) to F(0). The chain is ATP synthase subunit b from Trichormus variabilis (strain ATCC 29413 / PCC 7937) (Anabaena variabilis).